Reading from the N-terminus, the 209-residue chain is tRNA (guanine-N(7)-)-methyltransferase (209 aa).

S-adenosyl-L-methionine contacts are provided by glutamate 40, glutamate 65, and aspartate 114. Aspartate 114 is a catalytic residue. Substrate-binding positions include aspartate 150 and 188–191 (TAFE).

This sequence belongs to the class I-like SAM-binding methyltransferase superfamily. TrmB family.

The catalysed reaction is guanosine(46) in tRNA + S-adenosyl-L-methionine = N(7)-methylguanosine(46) in tRNA + S-adenosyl-L-homocysteine. The protein operates within tRNA modification; N(7)-methylguanine-tRNA biosynthesis. Catalyzes the formation of N(7)-methylguanine at position 46 (m7G46) in tRNA. This chain is tRNA (guanine-N(7)-)-methyltransferase, found in Bdellovibrio bacteriovorus (strain ATCC 15356 / DSM 50701 / NCIMB 9529 / HD100).